Here is a 424-residue protein sequence, read N- to C-terminus: Zygote arrest protein 1 (424 aa).

Disordered regions lie at residues 125–175 and 196–313; these read RTLQ…PMRF and GPGP…SPEL. Gly residues predominate over residues 141-150; that stretch reads GAEGTTGGGS. Residues 289-298 show a composition bias toward basic and acidic residues; sequence RARDGGDGRE. The 3CxxC-type zinc finger occupies 326 to 409; the sequence is KYGYYHCKDC…RQDLCGRCKG (84 aa).

This sequence belongs to the ZAR1 family. Interacts with YBX2. Ubiquitinated and degradaded by the proteasome during oocyte meiotic maturation, leading to MARDO (mitochondria-associated ribonucleoprotein domain) membraneless compartment dissolution. As to expression, ovary and testis.

The protein localises to the cytoplasm. It is found in the cytoplasmic ribonucleoprotein granule. Functionally, mRNA-binding protein that mediates formation of MARDO (mitochondria-associated ribonucleoprotein domain), a membraneless compartment that stores maternal mRNAs in oocytes. MARDO assembly around mitochondria is directed by an increase in mitochondrial membrane potential during oocyte growth. Promotes formation of MARDO phase-separated membraneless compartment by undergoing liquid-liquid phase separation upon binding to maternal mRNAs. Binds to the 3'-UTR of maternal mRNAs. Maternal mRNAs stored in the MARDO are translationally repressed. Essential for female fertility and oocyte-to-embryo transition by coordinating maternal mRNA storage, translation and degradation. The chain is Zygote arrest protein 1 from Homo sapiens (Human).